A 169-amino-acid polypeptide reads, in one-letter code: uncharacterized protein (169 aa).

In terms of domain architecture, Nudix hydrolase spans 28–157; that stretch reads ELHLVVHVCI…EFIPYFFLNQ (130 aa). Residues 65-87 carry the Nudix box motif; sequence AGSALKGETSRQAAEREVKEELG. Residues Glu81 and Glu85 each contribute to the Mg(2+) site.

Belongs to the Nudix hydrolase family. Requires Mg(2+) as cofactor.

This is an uncharacterized protein from Listeria innocua serovar 6a (strain ATCC BAA-680 / CLIP 11262).